A 677-amino-acid polypeptide reads, in one-letter code: Methionine--tRNA ligase (677 aa).

Residues Pro15–His25 carry the 'HIGH' region motif. Zn(2+) is bound by residues Cys146, Cys149, Cys159, and Cys162. Residues Lys333–Ser337 carry the 'KMSKS' region motif. Lys336 is an ATP binding site. One can recognise a tRNA-binding domain in the interval Asp575–Lys677.

Belongs to the class-I aminoacyl-tRNA synthetase family. MetG type 1 subfamily. In terms of assembly, homodimer. Zn(2+) serves as cofactor.

The protein resides in the cytoplasm. The catalysed reaction is tRNA(Met) + L-methionine + ATP = L-methionyl-tRNA(Met) + AMP + diphosphate. Is required not only for elongation of protein synthesis but also for the initiation of all mRNA translation through initiator tRNA(fMet) aminoacylation. The chain is Methionine--tRNA ligase from Salmonella agona (strain SL483).